The chain runs to 504 residues: Glutamate--tRNA ligase (504 aa).

The short motif at 10–20 (PSPTGDPHVGT) is the 'HIGH' region element. The 'KMSKS' region motif lies at 251–255 (KLSKR). Position 254 (K254) interacts with ATP.

This sequence belongs to the class-I aminoacyl-tRNA synthetase family. Glutamate--tRNA ligase type 1 subfamily. As to quaternary structure, monomer.

It localises to the cytoplasm. It catalyses the reaction tRNA(Glu) + L-glutamate + ATP = L-glutamyl-tRNA(Glu) + AMP + diphosphate. In terms of biological role, catalyzes the attachment of glutamate to tRNA(Glu) in a two-step reaction: glutamate is first activated by ATP to form Glu-AMP and then transferred to the acceptor end of tRNA(Glu). The sequence is that of Glutamate--tRNA ligase from Cellvibrio japonicus (strain Ueda107) (Pseudomonas fluorescens subsp. cellulosa).